Here is a 319-residue protein sequence, read N- to C-terminus: MSDYQVLLYYKYTTIDDPETFAKEHLAACKEMELKGRILVATEGINGTVSGTVEATNKYMDYMANDARFADMVFKIDAADAHAFKKMHVRPRAEIVSLSLEEDVNPLEVTGTYLEPSEFREALLDEDTVILDARNDYEFDIGHFRGAVRPDIQNFRELPGWIEDNREQLADKKIVTYCTGGIRCEKFSGWLKTAGFDDVSQLHGGIATYGKNEETKGELWDGQMYVFDERIAVPINQVNPTIVGKDYFDGTPCERYINCANPYCNKQILASVENEKKYLRSCSHDCRVHPANLYTKNLSKEEFTERLQAINESSPEMVQ.

Residues 124-218 (LDEDTVILDA…YGKNEETKGE (95 aa)) enclose the Rhodanese domain. Cys-178 acts as the Cysteine persulfide intermediate in catalysis.

Belongs to the TrhO family.

It catalyses the reaction uridine(34) in tRNA + AH2 + O2 = 5-hydroxyuridine(34) in tRNA + A + H2O. Functionally, catalyzes oxygen-dependent 5-hydroxyuridine (ho5U) modification at position 34 in tRNAs. The protein is tRNA uridine(34) hydroxylase of Listeria monocytogenes serovar 1/2a (strain ATCC BAA-679 / EGD-e).